The sequence spans 448 residues: Ribosomal protein uS12 methylthiotransferase RimO (448 aa).

An MTTase N-terminal domain is found at 7–123 (EKVSLVSLGC…IAEIIAEKEG (117 aa)). Residues C16, C52, C86, C161, C165, and C168 each contribute to the [4Fe-4S] cluster site. Residues 147–377 (SSPYYTAYLK…MRTQARVSFK (231 aa)) form the Radical SAM core domain. Positions 380 to 448 (RSLVDTEELV…DYDLIGEIVP (69 aa)) constitute a TRAM domain.

The protein belongs to the methylthiotransferase family. RimO subfamily. It depends on [4Fe-4S] cluster as a cofactor.

Its subcellular location is the cytoplasm. The enzyme catalyses L-aspartate(89)-[ribosomal protein uS12]-hydrogen + (sulfur carrier)-SH + AH2 + 2 S-adenosyl-L-methionine = 3-methylsulfanyl-L-aspartate(89)-[ribosomal protein uS12]-hydrogen + (sulfur carrier)-H + 5'-deoxyadenosine + L-methionine + A + S-adenosyl-L-homocysteine + 2 H(+). Its function is as follows. Catalyzes the methylthiolation of an aspartic acid residue of ribosomal protein uS12. This Geotalea uraniireducens (strain Rf4) (Geobacter uraniireducens) protein is Ribosomal protein uS12 methylthiotransferase RimO.